Reading from the N-terminus, the 91-residue chain is Bacterial microcompartment shell protein PduJ (91 aa).

The BMC domain maps to 4 to 88 (ALGLVETKGL…PHSDVEAILP (85 aa)).

This sequence belongs to the bacterial microcompartments protein family. In terms of assembly, homohexamer with a central pore of about 5.7 Angstroms in diameter. Interacts with PduP, which targets PduP to the BMC.

The protein resides in the bacterial microcompartment. It functions in the pathway polyol metabolism; 1,2-propanediol degradation. One of the major shell proteins of the bacterial microcompartment (BMC) dedicated to 1,2-propanediol (1,2-PD) degradation. The isolated BMC shell component protein ratio for J:A:B':B:K:T:U is approximately 15:10:7:6:1:1:2. At least one of PduA or PduJ is required for BMC assembly; it must be encoded as the first gene in the pdu operon. Required for structural integrity of BMCs and to mitigate propionaldehyde toxicity, probably joins facets responsible for BMC closure. Edge residues (particularly Lys-25) are important for function and assembly of the BMC. 80% identical to PduA; although their pore regions appear structurally identical, unlike PduA plays no role in 1,2-PD diffusion into or out of the BMC shell. If pduJ is cloned in the chromosomal position of pduA it is able to complement a pduA deletion; it then has a functional pore as it assumes the transport functions of PduA. Overexpression of this protein leads to aberrant filaments that extend the length of the cell, cross the cleavage furrow and impair division. The filaments form nanotubes with a hollow center. Modeling suggests PduJ is probably the hub for binding multiple enzymes to the interior of the BMC; modeling suggests PduC, PduD, PduG and PduM are targeted to PduJ. Functionally, the 1,2-propanediol (1,2-PD) degradation bacterial microcompartment (BMC) concentrates low levels of 1,2-PD catabolic enzymes, concentrates volatile reaction intermediates thus enhancing pathway flux and keeps the level of toxic, mutagenic propionaldehyde low. This chain is Bacterial microcompartment shell protein PduJ, found in Salmonella typhimurium (strain LT2 / SGSC1412 / ATCC 700720).